The sequence spans 445 residues: Secretin receptor (445 aa).

A signal peptide spans 1-21 (MCPRPGPPLGLWLLLGFACAA). The Extracellular portion of the chain corresponds to 22–137 (HLVGAPPRLC…HERQHAYLLK (116 aa)). Disulfide bonds link C44/C71, C62/C103, and C85/C119. 4 N-linked (GlcNAc...) asparagine glycosylation sites follow: N68, N96, N102, and N124. The chain crosses the membrane as a helical span at residues 138–163 (LKVMYTVGYSSSLVMLLVALGILCAF). At 164 to 170 (RRLHCTR) the chain is on the cytoplasmic side. A helical membrane pass occupies residues 171–191 (NYIHMHLFLSFILRALSNFIK). The Extracellular segment spans residues 192-212 (DAVLFSSDDAIHCDAHRVGCK). C211 and C281 are oxidised to a cystine. Residues 213-235 (LVMVFFQYCIMANYAWLLVEGLY) form a helical membrane-spanning segment. At 236 to 250 (LHSLLVVSFFSERKC) the chain is on the cytoplasmic side. The chain crosses the membrane as a helical span at residues 251 to 272 (LQGFVVLGWGSPAMFVTSWAVT). Topologically, residues 273–287 (RHFLEDSGCWDINAN) are extracellular. The helical transmembrane segment at 288-311 (AAIWWVIRGPVILSILINFILFIN) threads the bilayer. The Cytoplasmic portion of the chain corresponds to 312 to 336 (ILRILTRKLRTQETRGQDMNHYKRL). Residues 337-352 (ARSTLLLIPLFGVHYI) form a helical membrane-spanning segment. Topologically, residues 353-363 (VFVFSPEGAME) are extracellular. A helical transmembrane segment spans residues 364-387 (IQLFFELALGSFQGLVVAVLYCFL). Topologically, residues 388–445 (NGEVQLEVQKKWQQWHLWEPPLCPVALSSSFSNGTSSLNSTKACPSGRSRDTCKVSII) are cytoplasmic.

The protein belongs to the G-protein coupled receptor 2 family. In terms of processing, phosphorylated on Ser and Thr residues at the cytoplasmic C-terminus by G protein-coupled receptor kinases (GRKs).

The protein localises to the cell membrane. It localises to the basolateral cell membrane. Its function is as follows. G protein-coupled receptor activated by secretin (SCT), which is involved in different processes such as regulation of the pH of the duodenal content, food intake and water homeostasis. Ligand binding causes a conformation change that triggers signaling via guanine nucleotide-binding proteins (G proteins) and activates cAMP-dependent pathway. Upon binding to secretin, regulates the pH of the duodenum by (1) inhibiting the secretion of gastric acid from the parietal cells of the stomach and (2) stimulating the production of bicarbonate (NaHCO(3)) from the ductal cells of the pancreas. In addition to regulating the pH of the duodenal content, plays a central role in diet induced thermogenesis: acts as a non-sympathetic brown fat (BAT) activator mediating prandial thermogenesis, which consequentially induces satiation. Mechanistically, secretin released by the gut after a meal binds to secretin receptor (SCTR) in brown adipocytes, activating brown fat thermogenesis by stimulating lipolysis, which is sensed in the brain and promotes satiation. Also able to stimulate lipolysis in white adipocytes. Also plays an important role in cellular osmoregulation by regulating renal water reabsorption. Also plays a role in the central nervous system: required for synaptic plasticity. The sequence is that of Secretin receptor (SCTR) from Oryctolagus cuniculus (Rabbit).